Here is a 1522-residue protein sequence, read N- to C-terminus: Histone-lysine N-methyltransferase EZH2 (1522 aa).

Residues 1–196 (MSPARGDANA…PKTPTPKNTE (196 aa)) are disordered. Over residues 39 to 61 (NRENLRDRDRADKLEKLEKDAHA) the composition is skewed to basic and acidic residues. Low complexity-rich tracts occupy residues 64 to 76 (QTQT…PVTV) and 103 to 130 (RGST…SPSL). Residues 141–162 (ILASRTSRFSNRTGIRDSQSPS) show a composition bias toward polar residues. Over residues 180 to 195 (ATSNTPAPKTPTPKNT) the composition is skewed to low complexity. The interval 190 to 220 (PTPKNTEWTVDKIASALSVLAEEVPQNHSRL) is SBD domain. An EBD domain region spans residues 221 to 250 (VNFLLEETEKRAPQPRHLSKTDPFAHMKSK). The segment at 251-300 (AIDANRPRPEGVPTMDVKFKQHSGEYGKSRNSGRRFQYPVVCIKPDREPV) is BAM domain. Residues 301 to 320 (PPYRFHHAEIRKNILALNSQ) are SAL domain. The SRM domain stretch occupies residues 321–360 (LNFVPHLRDVDPNSAEEQKYSAWLMDLENLDSKSGFKIQP). An SANT1L domain region spans residues 361-480 (RSQKIAKRAQ…PIFDNKRAKD (120 aa)). The tract at residues 406 to 426 (PESDDSMTPQQKSNLLDTYSD) is disordered. The span at 411 to 422 (SMTPQQKSNLLD) shows a compositional bias: polar residues. Residues 481 to 560 (APGSQKPPDE…EQRQKTEGGS (80 aa)) are MCSS domain. Positions 508, 511, 516, 518, 570, 574, 615, 625, 685, 687, 691, 697, 699, 709, 713, 715, 720, 727, 729, 736, 746, 748, 755, 760, 763, and 784 each coordinate Zn(2+). Positions 561-650 (ANAPPAHPPC…PVEPRTIPKQ (90 aa)) are SANT2L domain. Positions 658–780 (RRKKQLMSDW…PENAYDEVLH (123 aa)) constitute a CXC domain. Positions 795–919 (KAVVLGKSQL…AGEELFFNYG (125 aa)) constitute an SET domain. Residues Tyr-809, Lys-852, Ser-854, and Tyr-855 each coordinate S-adenosyl-L-homocysteine. Residues Tyr-809, Lys-852, Ser-854, Tyr-855, Asn-880, His-881, and Thr-926 each coordinate S-adenosyl-L-methionine. His-881 contributes to the S-adenosyl-L-homocysteine binding site. Lys-927 contacts S-adenosyl-L-homocysteine. The tract at residues 933–1522 (NEQSGAETTP…KPARYRDEGE (590 aa)) is disordered. Residues 935–946 (QSGAETTPQQPK) show a composition bias toward polar residues. Acidic residues predominate over residues 971 to 988 (GFDDDDRDGNDSDPDDLW). A compositionally biased stretch (low complexity) spans 992 to 1024 (QQQQQQQQQQQQQQQQQQQQQQQQQQQQQQQQQ). The segment covering 1025–1038 (AQKPQPSTSHQPQS) has biased composition (polar residues). Residues 1053-1066 (SPDKQLRRENHDAQ) are compositionally biased toward basic and acidic residues. The segment covering 1072–1091 (QFQQQEQQQQQQQQQQQQQQ) has biased composition (low complexity). The span at 1127 to 1136 (DSSSGGSANE) shows a compositional bias: polar residues. Positions 1142–1162 (KPSRRGGARPGAGRKPKHRPP) are enriched in basic residues. Composition is skewed to basic and acidic residues over residues 1207–1221 (SDSK…TDKE) and 1228–1238 (VNEKDREKGRD). The segment covering 1255 to 1299 (KSAPSPAKKQASSPTKISDSNRTTSKNTSSNNNNNTNNNNNNNNN) has biased composition (low complexity). Polar residues predominate over residues 1316–1330 (HLTNSQPAALSPSAT). 2 stretches are compositionally biased toward low complexity: residues 1355–1385 (STMT…SSSS) and 1415–1428 (SSSL…SVFS). Polar residues predominate over residues 1455 to 1464 (SGLNSTSLSQ). Basic and acidic residues predominate over residues 1465 to 1494 (ERGEKHEKHEKEKPKEKKGEKERERERDRS).

The protein belongs to the class V-like SAM-binding methyltransferase superfamily. Histone-lysine methyltransferase family. EZ subfamily. As to quaternary structure, component of the polycomb repressive complex 2 (PRC2) that consists of four core subunits icluding EZH2, EED, SUZ12, and RBBP4, among which EZH2 is the catalytic subunit and which minimally requires EED and SUZ12 for catalysis.

The protein localises to the nucleus. The enzyme catalyses L-lysyl(27)-[histone H3] + 3 S-adenosyl-L-methionine = N(6),N(6),N(6)-trimethyl-L-lysyl(27)-[histone H3] + 3 S-adenosyl-L-homocysteine + 3 H(+). Its activity is regulated as follows. The end product of PRC2 catalysis, H3K27me3, interacts with EED to stimulate the enzymatic activity of PRC2 allosterically. The enzymatic activity of PRC2 is regulated in a very complex manner and PCR2 can adopt different stages including the autoinhibited (A); SAM-bound autoinhibited (A'), basal (B), and H3K27me3-stimulated (S) stages. Actictivity is inhibited by pyridone inhibitors such as GSK126. Its function is as follows. Catalytic subunit of the of the Polycomb Repressive Complex 2 (PRC2), a histone H3 lysine methyltransferase responsible for generating mono-, di-, and tri-methylation on Lys27 (H3K27me1, H3K27me2 and H3K27me3). The tri-methylated form is known to be critical in gene repression, and its proper placement is essential in defining repression patterns during development. The PRC2 complex interacts with thousands of RNA species in vivo, but the physiological function of RNA binding has still to be determined. The polypeptide is Histone-lysine N-methyltransferase EZH2 (Chaetomium thermophilum (strain DSM 1495 / CBS 144.50 / IMI 039719) (Thermochaetoides thermophila)).